The following is a 973-amino-acid chain: Coatomer subunit beta (973 aa).

HEAT repeat units follow at residues 98–133 (HEMI…REAE) and 134–170 (LLEQ…VSEH). S181 is subject to Phosphoserine. HEAT repeat units lie at residues 279-317 (NVLV…NNVG) and 318-354 (ALEE…SRNA). Phosphoserine is present on S540.

Oligomeric complex that consists of at least the alpha, beta, beta', gamma, delta, epsilon and zeta subunits. The complex interacts with ARF1 and PAB1. Post-translationally, the N-terminus is blocked.

The protein localises to the cytoplasm. It localises to the golgi apparatus membrane. It is found in the cytoplasmic vesicle. Its subcellular location is the COPI-coated vesicle membrane. Functionally, the coatomer is a cytosolic protein complex that binds to dilysine motifs and reversibly associates with Golgi non-clathrin-coated vesicles, which further mediate biosynthetic protein transport from the ER, via the Golgi up to the trans Golgi network. Coatomer complex is required for budding from Golgi membranes, and is essential for the retrograde Golgi-to-ER transport of dilysine-tagged proteins. Required for mitochondrial morphology. This Saccharomyces cerevisiae (strain ATCC 204508 / S288c) (Baker's yeast) protein is Coatomer subunit beta (SEC26).